A 442-amino-acid chain; its full sequence is Type 3 secretion system ATPase (442 aa).

173–178 (GVGKST) lines the ATP pocket.

This sequence belongs to the ATPase alpha/beta chains family. T3SS ATPase subfamily. The core secretion machinery of the T3SS is composed of approximately 20 different proteins, including cytoplasmic components, a base, an export apparatus and a needle. This subunit is part of the cytosolic complex. Forms homohexamers.

The protein resides in the cytoplasm. The enzyme catalyses ATP + H2O + cellular proteinSide 1 = ADP + phosphate + cellular proteinSide 2.. ATPase component of the type III secretion system (T3SS), also called injectisome, which is used to inject bacterial effector proteins into eukaryotic host cells. Acts as a molecular motor to provide the energy that is required for the export of proteins. Required for type III secretion apparatus (T3SA) formation, proper protein secretion, host cell invasion and virulence. May play a critical role in T3SS substrate recognition, disassembly of the effector/chaperone complex and unfolding of the effector in an ATP-dependent manner prior to secretion. This Xanthomonas euvesicatoria protein is Type 3 secretion system ATPase.